Consider the following 358-residue polypeptide: Feruloyl CoA ortho-hydroxylase F6H1-2 (358 aa).

Positions 200–308 constitute a Fe2OG dioxygenase domain; that stretch reads TKESLLMGSK…RISVPIFVNP (109 aa). Y216 serves as a coordination point for 2-oxoglutarate. Residues H231, D233, and H289 each coordinate Fe cation. 2 residues coordinate 2-oxoglutarate: R299 and S301.

Belongs to the iron/ascorbate-dependent oxidoreductase family. Requires L-ascorbate as cofactor. Fe(2+) is required as a cofactor. As to expression, expressed at low levels in tubers, underground stems, leaves and petioles.

The catalysed reaction is (E)-feruloyl-CoA + 2-oxoglutarate + O2 = (E)-6-hydroxyferuloyl-CoA + succinate + CO2. It functions in the pathway phenylpropanoid metabolism. In terms of biological role, 2-oxoglutarate (OG)- and Fe(II)-dependent dioxygenase (2OGD) involved in scopoletin biosynthesis. Converts feruloyl CoA into 6'-hydroxyferuloyl CoA, and, at low efficiency, caffeoyl-CoA into 6'-hydroxycaffeate, but has no activity with p-coumaroyl-CoA. The chain is Feruloyl CoA ortho-hydroxylase F6H1-2 from Ipomoea batatas (Sweet potato).